Consider the following 122-residue polypeptide: NADH-quinone oxidoreductase subunit A (122 aa).

The next 3 helical transmembrane spans lie at 10–30 (LIIF…LTAG), 67–87 (FALL…WAVV), and 91–111 (LGLF…IGLI).

The protein belongs to the complex I subunit 3 family. NDH-1 is composed of 14 different subunits. Subunits NuoA, H, J, K, L, M, N constitute the membrane sector of the complex.

The protein resides in the cell membrane. The catalysed reaction is a quinone + NADH + 5 H(+)(in) = a quinol + NAD(+) + 4 H(+)(out). Functionally, NDH-1 shuttles electrons from NADH, via FMN and iron-sulfur (Fe-S) centers, to quinones in the respiratory chain. The immediate electron acceptor for the enzyme in this species is believed to be a menaquinone. Couples the redox reaction to proton translocation (for every two electrons transferred, four hydrogen ions are translocated across the cytoplasmic membrane), and thus conserves the redox energy in a proton gradient. This chain is NADH-quinone oxidoreductase subunit A, found in Geobacillus kaustophilus (strain HTA426).